Reading from the N-terminus, the 112-residue chain is Nitrogen regulatory protein P-II 1 (112 aa).

At Y51 the chain carries O-UMP-tyrosine.

It belongs to the P(II) protein family. Homotrimer. Post-translationally, uridylylated/deuridylylated by GlnD.

P-II indirectly controls the transcription of the glutamine synthetase gene (GlnA). P-II prevents NR-II-catalyzed conversion of NR-I to NR-I-phosphate, the transcriptional activator of GlnA. When P-II is uridylylated to P-II-UMP, these events are reversed. When the ratio of Gln to 2-ketoglutarate decreases, P-II is uridylylated to P-II-UMP, which causes the deadenylation of glutamine synthetase by GlnE, so activating the enzyme. The chain is Nitrogen regulatory protein P-II 1 (glnB) from Escherichia coli O157:H7.